A 512-amino-acid polypeptide reads, in one-letter code: Ribose import ATP-binding protein RbsA 1 (512 aa).

ABC transporter domains follow at residues 8–244 and 254–502; these read FRME…IGRE and AHRG…LNIA. 40–47 lines the ATP pocket; that stretch reads GENGAGKS.

This sequence belongs to the ABC transporter superfamily. Ribose importer (TC 3.A.1.2.1) family. In terms of assembly, the complex is composed of an ATP-binding protein (RbsA), two transmembrane proteins (RbsC) and a solute-binding protein (RbsB).

The protein resides in the cell inner membrane. The catalysed reaction is D-ribose(out) + ATP + H2O = D-ribose(in) + ADP + phosphate + H(+). In terms of biological role, part of the ABC transporter complex RbsABC involved in ribose import. Responsible for energy coupling to the transport system. The chain is Ribose import ATP-binding protein RbsA 1 from Rhizobium johnstonii (strain DSM 114642 / LMG 32736 / 3841) (Rhizobium leguminosarum bv. viciae).